Here is a 339-residue protein sequence, read N- to C-terminus: ATPase GET3 (339 aa).

Position 34-41 (34-41) interacts with ATP; it reads KGGVGKTT. D63 is a catalytic residue. ATP-binding residues include E244 and N271. C282 and C285 together coordinate Zn(2+).

The protein belongs to the arsA ATPase family. Homodimer.

It localises to the cytoplasm. It is found in the endoplasmic reticulum. Functionally, ATPase required for the post-translational delivery of tail-anchored (TA) proteins to the endoplasmic reticulum. Recognizes and selectively binds the transmembrane domain of TA proteins in the cytosol. This complex then targets to the endoplasmic reticulum by membrane-bound receptors, where the tail-anchored protein is released for insertion. This process is regulated by ATP binding and hydrolysis. ATP binding drives the homodimer towards the closed dimer state, facilitating recognition of newly synthesized TA membrane proteins. ATP hydrolysis is required for insertion. Subsequently, the homodimer reverts towards the open dimer state, lowering its affinity for the membrane-bound receptor, and returning it to the cytosol to initiate a new round of targeting. In Podospora anserina (strain S / ATCC MYA-4624 / DSM 980 / FGSC 10383) (Pleurage anserina), this protein is ATPase GET3.